Here is a 151-residue protein sequence, read N- to C-terminus: Deoxyuridine 5'-triphosphate nucleotidohydrolase (151 aa).

Residues 70 to 72, asparagine 83, 87 to 89, and methionine 97 each bind substrate; these read RSG and LID.

The protein belongs to the dUTPase family. Requires Mg(2+) as cofactor.

It catalyses the reaction dUTP + H2O = dUMP + diphosphate + H(+). Its pathway is pyrimidine metabolism; dUMP biosynthesis; dUMP from dCTP (dUTP route): step 2/2. Functionally, this enzyme is involved in nucleotide metabolism: it produces dUMP, the immediate precursor of thymidine nucleotides and it decreases the intracellular concentration of dUTP so that uracil cannot be incorporated into DNA. This is Deoxyuridine 5'-triphosphate nucleotidohydrolase from Shigella sonnei (strain Ss046).